Reading from the N-terminus, the 417-residue chain is Serine hydroxymethyltransferase (417 aa).

(6S)-5,6,7,8-tetrahydrofolate-binding positions include Leu-112 and 116–118; that span reads GHL. Lys-221 carries the N6-(pyridoxal phosphate)lysine modification. Glu-247 is a binding site for (6S)-5,6,7,8-tetrahydrofolate.

It belongs to the SHMT family. As to quaternary structure, homodimer. Pyridoxal 5'-phosphate is required as a cofactor.

It is found in the cytoplasm. It catalyses the reaction (6R)-5,10-methylene-5,6,7,8-tetrahydrofolate + glycine + H2O = (6S)-5,6,7,8-tetrahydrofolate + L-serine. It functions in the pathway one-carbon metabolism; tetrahydrofolate interconversion. Its pathway is amino-acid biosynthesis; glycine biosynthesis; glycine from L-serine: step 1/1. Its function is as follows. Catalyzes the reversible interconversion of serine and glycine with tetrahydrofolate (THF) serving as the one-carbon carrier. This reaction serves as the major source of one-carbon groups required for the biosynthesis of purines, thymidylate, methionine, and other important biomolecules. Also exhibits THF-independent aldolase activity toward beta-hydroxyamino acids, producing glycine and aldehydes, via a retro-aldol mechanism. This Borrelia turicatae (strain 91E135) protein is Serine hydroxymethyltransferase.